We begin with the raw amino-acid sequence, 91 residues long: ATP synthase subunit c (91 aa).

2 consecutive transmembrane segments (helical) span residues 4-24 and 53-73; these read FTMC…GTGI and IGLA…LIIL.

It belongs to the ATPase C chain family. F-type ATPases have 2 components, F(1) - the catalytic core - and F(0) - the membrane proton channel. F(1) has five subunits: alpha(3), beta(3), gamma(1), delta(1), epsilon(1). F(0) has three main subunits: a(1), b(2) and c(10-14). The alpha and beta chains form an alternating ring which encloses part of the gamma chain. F(1) is attached to F(0) by a central stalk formed by the gamma and epsilon chains, while a peripheral stalk is formed by the delta and b chains.

It localises to the cell inner membrane. In terms of biological role, f(1)F(0) ATP synthase produces ATP from ADP in the presence of a proton or sodium gradient. F-type ATPases consist of two structural domains, F(1) containing the extramembraneous catalytic core and F(0) containing the membrane proton channel, linked together by a central stalk and a peripheral stalk. During catalysis, ATP synthesis in the catalytic domain of F(1) is coupled via a rotary mechanism of the central stalk subunits to proton translocation. Its function is as follows. Key component of the F(0) channel; it plays a direct role in translocation across the membrane. A homomeric c-ring of between 10-14 subunits forms the central stalk rotor element with the F(1) delta and epsilon subunits. This is ATP synthase subunit c from Geotalea uraniireducens (strain Rf4) (Geobacter uraniireducens).